The primary structure comprises 61 residues: Small ribosomal subunit protein uS14 (61 aa).

Residues C24, C27, C40, and C43 each contribute to the Zn(2+) site.

It belongs to the universal ribosomal protein uS14 family. Zinc-binding uS14 subfamily. Part of the 30S ribosomal subunit. Contacts proteins S3 and S10. It depends on Zn(2+) as a cofactor.

Binds 16S rRNA, required for the assembly of 30S particles and may also be responsible for determining the conformation of the 16S rRNA at the A site. This Kosmotoga olearia (strain ATCC BAA-1733 / DSM 21960 / TBF 19.5.1) protein is Small ribosomal subunit protein uS14.